The following is a 989-amino-acid chain: Clumping factor A (989 aa).

Positions 1 to 39 (MNMKKKEKHAIRKKSIGVASVLVGTLIGFGLLSSKEADA) are cleaved as a signal peptide. Residues 9 to 20 (HAIRKKSIGVAS) carry the YSIRK-G/S signaling motif motif. Disordered stretches follow at residues 34–205 (SKEA…VSQA) and 529–960 (FNNG…SEDE). The interval 40-542 (SENSVTQSDS…SGSGDGIDKP (503 aa)) is ligand binding A region. The segment covering 47–65 (SDSASNESKSNDSSSVSAA) has biased composition (low complexity). Over residues 71–105 (TNVSDTKTSSNTNNGETSVAQNPAQQETTQSSSTN) the composition is skewed to polar residues. 2 stretches are compositionally biased toward low complexity: residues 106 to 132 (ATTE…ATTQ) and 143 to 162 (NQTS…SVNS). Residues 163 to 205 (PQNSTNAENVSTTQDTSTEATPSNNESAPQNTDASNKDVVSQA) are compositionally biased toward polar residues. Acidic residues predominate over residues 547 to 565 (QPDEPGEIEPIPEDSDSDP). Over residues 566 to 598 (GSDSGSDSNSDSGSDSGSDSTSDSGSDSASDSD) the composition is skewed to low complexity. The span at 599–917 (SASDSDSASD…DNDSDSDSNS (319 aa)) shows a compositional bias: acidic residues. A compositionally biased stretch (low complexity) spans 918 to 936 (DSESGSNNNVVPPNSPKNG). Over residues 943 to 952 (NEAKDSKEPL) the composition is skewed to basic and acidic residues. An LPXTG sorting signal motif is present at residues 952-956 (LPDTG). Thr955 carries the post-translational modification Pentaglycyl murein peptidoglycan amidated threonine. Positions 956–989 (GSEDEANTSLIWGLLASLGSLLLFRRKKENKDKK) are cleaved as a propeptide — removed by sortase.

The protein belongs to the serine-aspartate repeat-containing protein (SDr) family.

The protein localises to the secreted. The protein resides in the cell wall. Cell surface-associated protein implicated in virulence. Promotes bacterial attachment exclusively to the gamma-chain of human fibrinogen. Induces formation of bacterial clumps, which diminish the ability of group IIA phospholipase A2 to cause bacterial phospholipid hydrolysis and killing. Significantly decreases macrophage phagocytosis possibly thanks to the clumps, clumped bacteria being too large to be phagocytosed. Dominant factor responsible for human platelet aggregation, which may be an important mechanism for initiating infective endocarditis. The polypeptide is Clumping factor A (clfA) (Staphylococcus aureus (strain N315)).